The following is a 72-amino-acid chain: uncharacterized protein (72 aa).

The interval K52 to E72 is disordered. The span at R55–E72 shows a compositional bias: basic and acidic residues.

This sequence belongs to the YiiE family.

This is an uncharacterized protein from Escherichia coli O6:H1 (strain CFT073 / ATCC 700928 / UPEC).